Here is a 2262-residue protein sequence, read N- to C-terminus: Protein Ycf2 (2262 aa).

1607-1614 (GFIGTGRS) contacts ATP.

It belongs to the Ycf2 family.

The protein resides in the plastid. It is found in the chloroplast stroma. Probable ATPase of unknown function. Its presence in a non-photosynthetic plant (Epifagus virginiana) and experiments in tobacco indicate that it has an essential function which is probably not related to photosynthesis. This chain is Protein Ycf2, found in Nuphar advena (Common spatterdock).